The sequence spans 698 residues: Polyphosphate kinase (698 aa).

Asn-63 serves as a coordination point for ATP. Residues Arg-390 and Arg-420 each contribute to the Mg(2+) site. Residue His-450 is the Phosphohistidine intermediate of the active site. ATP contacts are provided by Tyr-483, Arg-579, and His-607.

This sequence belongs to the polyphosphate kinase 1 (PPK1) family. The cofactor is Mg(2+). Post-translationally, an intermediate of this reaction is the autophosphorylated ppk in which a phosphate is covalently linked to a histidine residue through a N-P bond.

It catalyses the reaction [phosphate](n) + ATP = [phosphate](n+1) + ADP. Functionally, catalyzes the reversible transfer of the terminal phosphate of ATP to form a long-chain polyphosphate (polyP). In Xylella fastidiosa (strain Temecula1 / ATCC 700964), this protein is Polyphosphate kinase.